The primary structure comprises 1193 residues: DNA-directed RNA polymerase subunit beta (1193 aa).

Acidic residues predominate over residues 1149–1162 (EEEIEMRDLEDEED). Residues 1149 to 1193 (EEEIEMRDLEDEEDAKQADGLALSGDEEPEETASADVERDVVTKE) form a disordered region. A compositionally biased stretch (basic and acidic residues) spans 1184–1193 (DVERDVVTKE).

The protein belongs to the RNA polymerase beta chain family. As to quaternary structure, RNAP is composed of a core of 2 alpha, a beta and a beta' subunit. The core is associated with a delta subunit, and at least one of epsilon or omega. When a sigma factor is associated with the core the holoenzyme is formed, which can initiate transcription.

It catalyses the reaction RNA(n) + a ribonucleoside 5'-triphosphate = RNA(n+1) + diphosphate. Its function is as follows. DNA-dependent RNA polymerase catalyzes the transcription of DNA into RNA using the four ribonucleoside triphosphates as substrates. The sequence is that of DNA-directed RNA polymerase subunit beta from Bacillus subtilis (strain 168).